The chain runs to 425 residues: Putative E3 ubiquitin-protein ligase UBR7 (425 aa).

The UBR-type zinc finger occupies 44-116 (EKCSYSQGSV…KNLECKLFPD (73 aa)). The PHD-type; atypical zinc finger occupies 132 to 188 (GLYCVCKRPYPDPEDEVPDEMIQCVVCEDWFHGRHLGAIPPESGDFQEMVCQACMRR). The disordered stretch occupies residues 212–269 (LPNATGMGDEDVSKPENGAPQDNGLKEDAPEHGRDSVNEVKAEQKNEPCSSSSSESDL). Glycyl lysine isopeptide (Lys-Gly) (interchain with G-Cter in SUMO2) cross-links involve residues Lys-225 and Lys-252. Positions 235-257 (GLKEDAPEHGRDSVNEVKAEQKN) are enriched in basic and acidic residues. Residue Ser-264 is modified to Phosphoserine. Glycyl lysine isopeptide (Lys-Gly) (interchain with G-Cter in SUMO2) cross-links involve residues Lys-274 and Lys-398.

In terms of tissue distribution, expressed in testis and sperm (at protein level).

The catalysed reaction is S-ubiquitinyl-[E2 ubiquitin-conjugating enzyme]-L-cysteine + [acceptor protein]-L-lysine = [E2 ubiquitin-conjugating enzyme]-L-cysteine + N(6)-ubiquitinyl-[acceptor protein]-L-lysine.. The protein operates within protein modification; protein ubiquitination. E3 ubiquitin-protein ligase which is a component of the N-end rule pathway. Recognizes and binds to proteins bearing specific N-terminal residues that are destabilizing according to the N-end rule, leading to their ubiquitination and subsequent degradation. This chain is Putative E3 ubiquitin-protein ligase UBR7 (Ubr7), found in Mus musculus (Mouse).